A 135-amino-acid polypeptide reads, in one-letter code: Large ribosomal subunit protein eL32 (135 aa).

It belongs to the eukaryotic ribosomal protein eL32 family.

This Methanococcus maripaludis (strain C5 / ATCC BAA-1333) protein is Large ribosomal subunit protein eL32.